A 170-amino-acid chain; its full sequence is SKP1-like protein 16 (170 aa).

Positions 109-167 (ILAVNYLNVQDLLGLTCQTVADHMKDMSPEEVRELFNIENDYTPEEEDAIRKENAWAFE) are interaction with the F-box domain of F-box proteins.

Belongs to the SKP1 family. As to quaternary structure, part of a SCF (SKP1-cullin-F-box) protein ligase complex. Interacts with CPR1/CPR30, At3g61590 and At4g11590. As to expression, mainly detected in the siliques.

Its subcellular location is the nucleus. It participates in protein modification; protein ubiquitination. Functionally, involved in ubiquitination and subsequent proteasomal degradation of target proteins. Together with CUL1, RBX1 and a F-box protein, it forms a SCF E3 ubiquitin ligase complex. The functional specificity of this complex depends on the type of F-box protein. In the SCF complex, it serves as an adapter that links the F-box protein to CUL1. The polypeptide is SKP1-like protein 16 (ASK16) (Arabidopsis thaliana (Mouse-ear cress)).